Here is a 152-residue protein sequence, read N- to C-terminus: uncharacterized protein (152 aa).

The chain crosses the membrane as a helical span at residues 12–34 (ALLYLGGGLLAMIYGLITFFMAF).

To B.subtilis YfjD.

The protein localises to the membrane. This is an uncharacterized protein from Bacillus subtilis (strain 168).